We begin with the raw amino-acid sequence, 674 residues long: Enzymatic polyprotein (674 aa).

Residues 40 to 130 (IELHCFVDTG…CQLYEPFIQF (91 aa)) are protease. Aspartate 47 is a catalytic residue. Residues 267-447 (LKVIKPSKSP…KKINFLGLEI (181 aa)) form the Reverse transcriptase domain.

Belongs to the caulimoviridae enzymatic polyprotein family.

It carries out the reaction DNA(n) + a 2'-deoxyribonucleoside 5'-triphosphate = DNA(n+1) + diphosphate. Encodes for at least two polypeptides: protease (PR) and reverse transcriptase (RT). The protease processes the polyprotein in cis. Reverse transcriptase is multifunctional enzyme that converts the viral RNA genome into dsDNA in viral cytoplasmic capsids. This enzyme displays a DNA polymerase activity that can copy either DNA or RNA templates, and a ribonuclease H (RNase H) activity that cleaves the RNA strand of RNA-DNA heteroduplexes in a partially processive 3'- to 5'-endonucleasic mode. Neo-synthesized pregenomic RNA (pgRNA) are encapsidated, and reverse-transcribed inside the nucleocapsid. Partial (+)DNA is synthesized from the (-)DNA template and generates the relaxed circular DNA (RC-DNA) genome. After budding and infection, the RC-DNA migrates in the nucleus, and is converted into a plasmid-like covalently closed circular DNA (cccDNA). This Arabidopsis thaliana (Mouse-ear cress) protein is Enzymatic polyprotein.